The primary structure comprises 147 residues: Large ribosomal subunit protein uL15 (147 aa).

The segment at 1–47 (MKLHELKPAEGAVRAKRRLGRGTATGQGKTAGRGQKGQWSRSGGGVR) is disordered. The segment covering 23-35 (TATGQGKTAGRGQ) has biased composition (gly residues).

Belongs to the universal ribosomal protein uL15 family. Part of the 50S ribosomal subunit.

Functionally, binds to the 23S rRNA. This is Large ribosomal subunit protein uL15 from Clostridioides difficile (strain 630) (Peptoclostridium difficile).